We begin with the raw amino-acid sequence, 362 residues long: Olfactory receptor 5AU1 (362 aa).

Residues 1–79 (MTEFHLQSQM…TDPQLQRLLF (79 aa)) lie on the Extracellular side of the membrane. A glycan (N-linked (GlcNAc...) asparagine) is linked at asparagine 56. Residues 80-100 (VVFLGMYTATLLGNLVMFLLI) traverse the membrane as a helical segment. The Cytoplasmic portion of the chain corresponds to 101–116 (HVSATLHTPMYSLLKS). The helical transmembrane segment at 117–139 (LSFLDFCYSSTVVPQTLVNFLAK) threads the bilayer. Topologically, residues 140 to 150 (RKVISYFGCMT) are extracellular. A disulfide bridge links cysteine 148 with cysteine 230. Residues 151 to 171 (QMFFYAGFATSECYLIAAMAY) form a helical membrane-spanning segment. Residues 172–194 (DRYAAICNPLLYSTIMSPEVCAS) lie on the Cytoplasmic side of the membrane. The chain crosses the membrane as a helical span at residues 195–215 (LIVGSYSAGFLNSLIHTGCIF). The Extracellular segment spans residues 216-247 (SLKFCGAHVVTHFFCDGPPILSLSCVDTSLCE). A helical membrane pass occupies residues 248-268 (ILLFIFAGFNLLSCTLTILIS). At 269-290 (YFLILNTILKMSSAQGRFKAFS) the chain is on the cytoplasmic side. The helical transmembrane segment at 291–311 (TCASHLTAICLFFGTTLFMYL) threads the bilayer. Topologically, residues 312–322 (RPRSSYSLTQD) are extracellular. The helical transmembrane segment at 323–343 (RTVAVIYTVVIPVLNPLMYSL) threads the bilayer. The Cytoplasmic portion of the chain corresponds to 344–362 (RNKDVKKALIKVWGRKTME).

Belongs to the G-protein coupled receptor 1 family.

It is found in the cell membrane. In terms of biological role, odorant receptor. This chain is Olfactory receptor 5AU1 (OR5AU1), found in Homo sapiens (Human).